The following is a 96-amino-acid chain: Putative pterin-4-alpha-carbinolamine dehydratase (96 aa).

It belongs to the pterin-4-alpha-carbinolamine dehydratase family.

It catalyses the reaction (4aS,6R)-4a-hydroxy-L-erythro-5,6,7,8-tetrahydrobiopterin = (6R)-L-erythro-6,7-dihydrobiopterin + H2O. The protein is Putative pterin-4-alpha-carbinolamine dehydratase of Prochlorococcus marinus (strain MIT 9215).